A 709-amino-acid chain; its full sequence is ATP-binding cassette sub-family F member 3 (709 aa).

Position 2 is an N-acetylalanine (A2). Position 83 is a phosphoserine (S83). Residues 129-143 are compositionally biased toward basic and acidic residues; that stretch reads RLKAKQEKRSEKDTL. A disordered region spans residues 129 to 171; the sequence is RLKAKQEKRSEKDTLKTSNPLVLEEASASQAGSRKESRLESSG. S155, S157, and S161 each carry phosphoserine. Residues 161-171 are compositionally biased toward basic and acidic residues; that stretch reads SRKESRLESSG. ABC transporter domains are found at residues 178-424 and 492-707; these read VRIE…LNQQ and LQLD…RREG. 210–217 contributes to the ATP binding site; sequence GRNGLGKT. A Phosphoserine modification is found at S283. 525–532 is an ATP binding site; the sequence is GENGAGKS.

This sequence belongs to the ABC transporter superfamily. ABCF family. EF3 subfamily.

Functionally, displays an antiviral effect against flaviviruses such as west Nile virus (WNV) in the presence of OAS1B. The chain is ATP-binding cassette sub-family F member 3 (ABCF3) from Homo sapiens (Human).